The chain runs to 421 residues: Acylglycerol kinase, mitochondrial (421 aa).

K6 bears the N6-acetyllysine mark. Positions T15 to G31 are hydrophobic. One can recognise a DAGKc domain in the interval A58–K199. The interval I252 to R271 is disordered.

It belongs to the AGK family. In terms of assembly, component of the TIM22 complex, which core is composed of TIMM22, associated with TIMM10 (TIMM10A and/or TIMM10B), TIMM9, AGK and TIMM29. Interacts with SMIM26. It depends on Mg(2+) as a cofactor. Ubiquitously expressed.

It is found in the mitochondrion inner membrane. It localises to the mitochondrion intermembrane space. The enzyme catalyses a monoacylglycerol + ATP = a monoacyl-sn-glycero-3-phosphate + ADP + H(+). It carries out the reaction a 1,2-diacyl-sn-glycerol + ATP = a 1,2-diacyl-sn-glycero-3-phosphate + ADP + H(+). The catalysed reaction is an N-acylsphing-4-enine + ATP = an N-acylsphing-4-enine 1-phosphate + ADP + H(+). It catalyses the reaction 1,2-di-(9Z-octadecenoyl)-sn-glycerol + ATP = 1,2-di-(9Z-octadecenoyl)-sn-glycero-3-phosphate + ADP + H(+). The enzyme catalyses 1-(9Z-octadecenoyl)-sn-glycerol + ATP = 1-(9Z-octadecenoyl)-sn-glycero-3-phosphate + ADP + H(+). It carries out the reaction 1-(5Z,8Z,11Z,14Z-eicosatetraenoyl)-sn-glycerol + ATP = 1-(5Z,8Z,11Z,14Z-eicosatetraenoyl)-sn-glycero-3-phosphate + ADP + H(+). The catalysed reaction is a 1-acyl-sn-glycerol + ATP = a 1-acyl-sn-glycero-3-phosphate + ADP + H(+). It catalyses the reaction 1-hexadecanoyl-sn-glycerol + ATP = 1-hexadecanoyl-sn-glycero-3-phosphate + ADP + H(+). The enzyme catalyses a 2-acylglycerol + ATP = a 2-acyl-sn-glycerol 3-phosphate + ADP + H(+). It carries out the reaction 2-(5Z,8Z,11Z,14Z-eicosatetraenoyl)-glycerol + ATP = 2-(5Z,8Z,11Z,14Z-eicosatetraenoyl)-sn-glycero-3-phosphate + ADP + H(+). The catalysed reaction is N-(hexanoyl)sphing-4-enine + ATP = N-hexanoylsphing-4-enine 1-phosphate + ADP + H(+). The protein operates within lipid metabolism; glycerolipid metabolism. Both the ceramide and diacylglycerol kinase activities are inhibited by sphingosine and stimulated by cardiolipin. Both activities are stimulated by calcium when magnesium concentrations are low but inhibited by calcium when magnesium concentrations are high. Lipid kinase that can phosphorylate both monoacylglycerol and diacylglycerol to form lysophosphatidic acid (LPA) and phosphatidic acid (PA), respectively. Phosphorylates ceramide but not sphingosine. Phosphorylates 1,2-dioleoylglycerol more rapidly than 2,3-dioleoylglycerol. Independently of its lipid kinase activity, acts as a component of the TIM22 complex. The TIM22 complex mediates the import and insertion of multi-pass transmembrane proteins into the mitochondrial inner membrane by forming a twin-pore translocase that uses the membrane potential as the external driving force. In the TIM22 complex, required for the import of a subset of metabolite carriers into mitochondria, such as ANT1/SLC25A4 and SLC25A24, while it is not required for the import of TIMM23. Overexpression increases the formation and secretion of LPA, resulting in transactivation of EGFR and activation of the downstream MAPK signaling pathway, leading to increased cell growth. The polypeptide is Acylglycerol kinase, mitochondrial (Mus musculus (Mouse)).